Reading from the N-terminus, the 669-residue chain is Protein ENTREP3 (669 aa).

Helical transmembrane passes span 34 to 54 (LLTLGLAQVLLGILVITFSMV), 67 to 87 (SCPSWAGFSLAFSGLVGIVSW), and 91 to 111 (FTLVISFFSLLSVLCVMLSMA). Asn-160 is a glycosylation site (N-linked (GlcNAc...) asparagine). Residues 174 to 194 (LFSVCGLTICAAIICTLSAIV) traverse the membrane as a helical segment. Phosphoserine occurs at positions 359 and 390. Disordered regions lie at residues 387-420 (FEDSPLPRRPPRAARSYSCSAPEAPPPLGAPTAA), 445-502 (PRGG…TTSS), and 550-571 (RSAEKRRPVPTFQKVPLPSGPT). Residues 399–408 (AARSYSCSAP) are compositionally biased toward low complexity. Phosphoserine is present on Ser-494. Phosphoserine is present on Ser-575. Residues 597 to 624 (RRSPDPTGTGAHGYKQVRRSPWGRPGRE) are disordered.

It belongs to the ENTREP family. May interact with WWOX.

The protein localises to the membrane. This chain is Protein ENTREP3, found in Mus musculus (Mouse).